The sequence spans 505 residues: Argininosuccinate lyase (505 aa).

The protein belongs to the lyase 1 family. Argininosuccinate lyase subfamily.

It is found in the cytoplasm. It carries out the reaction 2-(N(omega)-L-arginino)succinate = fumarate + L-arginine. It functions in the pathway amino-acid biosynthesis; L-arginine biosynthesis; L-arginine from L-ornithine and carbamoyl phosphate: step 3/3. This Rhodococcoides fascians (Rhodococcus fascians) protein is Argininosuccinate lyase.